Reading from the N-terminus, the 373-residue chain is Cell surface Cu-only superoxide dismutase ARB_03674 (373 aa).

An N-terminal signal peptide occupies residues 1 to 55; it reads MIWKQPPRRMGEMGGSLSRRFGNAAASWAVWRVSRSCFSLLFFFYFFLFFSSSSL. N-linked (GlcNAc...) asparagine glycans are attached at residues N75 and N141. Residues H194, H196, and H212 each coordinate Cu cation. Cysteines 206 and 289 form a disulfide. 2 N-linked (GlcNAc...) asparagine glycosylation sites follow: N254 and N274. A Cu cation-binding site is contributed by H280. Residues N283 and N291 are each glycosylated (N-linked (GlcNAc...) asparagine). A disordered region spans residues 329–348; sequence GHAPTISATYTPTPTPSPPA. A compositionally biased stretch (low complexity) spans 331-340; the sequence is APTISATYTP. A lipid anchor (GPI-anchor amidated glycine) is attached at G352. A propeptide spans 353-373 (removed in mature form); it reads AGRLVGFSLGAIMAALVPLAL.

This sequence belongs to the Cu-Zn superoxide dismutase family. As to quaternary structure, monomer. Requires Cu cation as cofactor. The GPI-anchor is attached to the protein in the endoplasmic reticulum and serves to target the protein to the cell surface. There, the glucosamine-inositol phospholipid moiety is cleaved off and the GPI-modified mannoprotein is covalently attached via its lipidless GPI glycan remnant to the 1,6-beta-glucan of the outer cell wall layer.

The protein localises to the secreted. It is found in the cell wall. Its subcellular location is the cell membrane. It catalyses the reaction 2 superoxide + 2 H(+) = H2O2 + O2. Superoxide dismutases serve to convert damaging superoxide radicals, a key form of ROS, to less damaging hydrogen peroxide that can be converted into water by catalase action. Degrades host-derived reactive oxygen species to escape innate immune surveillance. Involved in the occurrence of miconazole-tolerant persisters in biofilms. Persisters are cells that survive high doses of an antimicrobial agent. The unusual attributes of SOD5-like fungal proteins, including the absence of zinc and an open active site that readily captures extracellular copper, make these SODs well suited to meet challenges in zinc and copper availability at the host-pathogen interface. The polypeptide is Cell surface Cu-only superoxide dismutase ARB_03674 (Arthroderma benhamiae (strain ATCC MYA-4681 / CBS 112371) (Trichophyton mentagrophytes)).